We begin with the raw amino-acid sequence, 256 residues long: Protein TV0584 (256 aa).

This sequence belongs to the CinA family.

The protein is Protein TV0584 of Thermoplasma volcanium (strain ATCC 51530 / DSM 4299 / JCM 9571 / NBRC 15438 / GSS1).